A 488-amino-acid polypeptide reads, in one-letter code: Katanin p60 ATPase-containing subunit A-like 1 (488 aa).

A disordered region spans residues 84–184; sequence FPNPVPEEGP…EQKKFDGTGY (101 aa). A compositionally biased stretch (basic and acidic residues) spans 144-167; that stretch reads KPDRPNTRDGRGNKAKEEKSKRNA. 246 to 253 is a binding site for ATP; that stretch reads GPPGTGKT.

Belongs to the AAA ATPase family. Katanin p60 subunit A1 subfamily. A-like 1 sub-subfamily.

The protein localises to the cytoplasm. It is found in the cytoskeleton. It localises to the spindle pole. Its subcellular location is the spindle. It carries out the reaction n ATP + n H2O + a microtubule = n ADP + n phosphate + (n+1) alpha/beta tubulin heterodimers.. Functionally, regulates microtubule dynamics in Sertoli cells, a process that is essential for spermiogenesis and male fertility. Severs microtubules in an ATP-dependent manner, promoting rapid reorganization of cellular microtubule arrays. This chain is Katanin p60 ATPase-containing subunit A-like 1 (katnal1), found in Danio rerio (Zebrafish).